The chain runs to 100 residues: Urease subunit gamma (100 aa).

The protein belongs to the urease gamma subunit family. As to quaternary structure, heterotrimer of UreA (gamma), UreB (beta) and UreC (alpha) subunits. Three heterotrimers associate to form the active enzyme.

The protein localises to the cytoplasm. It carries out the reaction urea + 2 H2O + H(+) = hydrogencarbonate + 2 NH4(+). It functions in the pathway nitrogen metabolism; urea degradation; CO(2) and NH(3) from urea (urease route): step 1/1. The sequence is that of Urease subunit gamma from Acetivibrio thermocellus (strain ATCC 27405 / DSM 1237 / JCM 9322 / NBRC 103400 / NCIMB 10682 / NRRL B-4536 / VPI 7372) (Clostridium thermocellum).